The chain runs to 209 residues: Octanoyltransferase (209 aa).

The 180-residue stretch at 30–209 (VNEPEIVYLV…IQTEFNKIFT (180 aa)) folds into the BPL/LPL catalytic domain. Residues 69 to 76 (RGGKFTFH), 143 to 145 (AIG), and 156 to 158 (GVA) each bind substrate. Cysteine 174 serves as the catalytic Acyl-thioester intermediate.

Belongs to the LipB family.

The protein resides in the cytoplasm. The enzyme catalyses octanoyl-[ACP] + L-lysyl-[protein] = N(6)-octanoyl-L-lysyl-[protein] + holo-[ACP] + H(+). It functions in the pathway protein modification; protein lipoylation via endogenous pathway; protein N(6)-(lipoyl)lysine from octanoyl-[acyl-carrier-protein]: step 1/2. Its function is as follows. Catalyzes the transfer of endogenously produced octanoic acid from octanoyl-acyl-carrier-protein onto the lipoyl domains of lipoate-dependent enzymes. Lipoyl-ACP can also act as a substrate although octanoyl-ACP is likely to be the physiological substrate. This Rickettsia canadensis (strain McKiel) protein is Octanoyltransferase.